The sequence spans 179 residues: Large ribosomal subunit protein uL16m (179 aa).

The protein belongs to the universal ribosomal protein uL16 family. Component of the mitochondrial ribosome large subunit.

Its subcellular location is the mitochondrion. This is Large ribosomal subunit protein uL16m (RPL16) from Arabidopsis thaliana (Mouse-ear cress).